Consider the following 103-residue polypeptide: Large ribosomal subunit protein bL21 (103 aa).

Belongs to the bacterial ribosomal protein bL21 family. In terms of assembly, part of the 50S ribosomal subunit. Contacts protein L20.

This protein binds to 23S rRNA in the presence of protein L20. The protein is Large ribosomal subunit protein bL21 of Glaesserella parasuis serovar 5 (strain SH0165) (Haemophilus parasuis).